Consider the following 383-residue polypeptide: Pentatricopeptide repeat-containing protein 2, mitochondrial (383 aa).

One copy of the PPR repeat lies at 161 to 195 (TSFNILMDMLFIKGKYKSALEVLIEMKNQNVKFTT). Position 377 is a phosphoserine (S377).

This sequence belongs to the PTCD2 family.

Its subcellular location is the mitochondrion. Involved in mitochondrial RNA maturation and mitochondrial respiratory chain function. This chain is Pentatricopeptide repeat-containing protein 2, mitochondrial (PTCD2), found in Pongo abelii (Sumatran orangutan).